We begin with the raw amino-acid sequence, 537 residues long: MDCMITKLNEKDQFISKIKDSDSKIGQFYHFDAMQEKSYSERLSMSNNGREVALAQVIKNYMSDLTLTEKQLQNISLLSEGAKVIIGGQQAGLFGGPLYTFHKIFSIITMSEKLSKDYNTNVIPVFWIAGEDHDFDEVNHTYAYNAQNAKLQKIKYHTMTPPEASVSTYYPDKAQLKDALKLFFKEMNETTHSKQMIEMCTKIIDQYDSWTDMFKALLNEVFKAYGLLLIDANNTELRKLEQPFIQKIIEHHQDVDASFRNNQQNTIANGLEQMIQTDTNVHLFLHEDNMRQLLTFKDNQFYLSKSDKYMTKEELLKILEVEPERFSNNVVTRPIMEEWLFNTVAFIGGPSEIKYWTELSEVFNTLDVSMPIVLPRLRISYLYPRTEKLLSQYQLKQHSIIEQGIEKDKEKFIRAQASQTFVDKVEEIKVQQEKLYQSLLTEVAGNNDNQLLVEKNNHIHQKQYEYLINRYLLNIERKNEISMKHFKELSETLHPMGGLQERIWNPLQIMNDFGIDVFSPSTYPPLSYTFDHIIVKP.

Belongs to the BshC family.

Its function is as follows. Involved in bacillithiol (BSH) biosynthesis. May catalyze the last step of the pathway, the addition of cysteine to glucosamine malate (GlcN-Mal) to generate BSH. The polypeptide is Putative cysteine ligase BshC (Staphylococcus saprophyticus subsp. saprophyticus (strain ATCC 15305 / DSM 20229 / NCIMB 8711 / NCTC 7292 / S-41)).